A 169-amino-acid chain; its full sequence is MPLLDSFTVDHTRMAAPAVRVAKTMQTPNKDTITVFDLRFCVPNQEILSERGIHTLEHLFAGFMRDHLNGNGVEIIDISPMGCRTGFYMSLIGAPDEARVGAAWQAAMSDVLTVQEQGKIPELNEYQCGTYSMHSLEEAHAIARHVLERGIGVNRNDELALPEEKLKSL.

The Fe cation site is built by His-54, His-58, and Cys-128.

It belongs to the LuxS family. In terms of assembly, homodimer. It depends on Fe cation as a cofactor.

It catalyses the reaction S-(5-deoxy-D-ribos-5-yl)-L-homocysteine = (S)-4,5-dihydroxypentane-2,3-dione + L-homocysteine. Involved in the synthesis of autoinducer 2 (AI-2) which is secreted by bacteria and is used to communicate both the cell density and the metabolic potential of the environment. The regulation of gene expression in response to changes in cell density is called quorum sensing. Catalyzes the transformation of S-ribosylhomocysteine (RHC) to homocysteine (HC) and 4,5-dihydroxy-2,3-pentadione (DPD). The protein is S-ribosylhomocysteine lyase of Aeromonas hydrophila subsp. hydrophila (strain ATCC 7966 / DSM 30187 / BCRC 13018 / CCUG 14551 / JCM 1027 / KCTC 2358 / NCIMB 9240 / NCTC 8049).